The chain runs to 380 residues: 1-deoxy-D-xylulose 5-phosphate reductoisomerase (380 aa).

Positions 9, 10, 11, 12, 36, and 117 each coordinate NADPH. Lysine 118 is a 1-deoxy-D-xylulose 5-phosphate binding site. Glutamate 119 contacts NADPH. Aspartate 139 is a Mn(2+) binding site. 1-deoxy-D-xylulose 5-phosphate contacts are provided by serine 140, glutamate 141, serine 165, and histidine 188. Residue glutamate 141 coordinates Mn(2+). Glycine 194 is a binding site for NADPH. 1-deoxy-D-xylulose 5-phosphate contacts are provided by serine 201, asparagine 206, lysine 207, and glutamate 210. Glutamate 210 is a Mn(2+) binding site.

Belongs to the DXR family. The cofactor is Mg(2+). Mn(2+) is required as a cofactor.

The enzyme catalyses 2-C-methyl-D-erythritol 4-phosphate + NADP(+) = 1-deoxy-D-xylulose 5-phosphate + NADPH + H(+). It participates in isoprenoid biosynthesis; isopentenyl diphosphate biosynthesis via DXP pathway; isopentenyl diphosphate from 1-deoxy-D-xylulose 5-phosphate: step 1/6. Catalyzes the NADPH-dependent rearrangement and reduction of 1-deoxy-D-xylulose-5-phosphate (DXP) to 2-C-methyl-D-erythritol 4-phosphate (MEP). The protein is 1-deoxy-D-xylulose 5-phosphate reductoisomerase of Aquifex aeolicus (strain VF5).